The primary structure comprises 231 residues: Caspase-like protein (231 aa).

This sequence belongs to the peptidase C14A family.

The sequence is that of Caspase-like protein from Trichoplusia ni ascovirus 2c (TnAV-2c).